Consider the following 431-residue polypeptide: Na(+)-translocating NADH-quinone reductase subunit F (431 aa).

A helical transmembrane segment spans residues 10–30 (ISIASLVFCVIGLILSGIILI). The 93-residue stretch at 41-133 (CKLKINDDDS…DMCLEIEERY (93 aa)) folds into the 2Fe-2S ferredoxin-type domain. Positions 76, 82, 85, and 117 each coordinate [2Fe-2S] cluster. Residues 136–286 (ASSWEGTVVS…SGPYGESFMK (151 aa)) enclose the FAD-binding FR-type domain.

This sequence belongs to the NqrF family. Composed of six subunits; NqrA, NqrB, NqrC, NqrD, NqrE and NqrF. The cofactor is [2Fe-2S] cluster. FAD serves as cofactor.

It is found in the cell inner membrane. It catalyses the reaction a ubiquinone + n Na(+)(in) + NADH + H(+) = a ubiquinol + n Na(+)(out) + NAD(+). Functionally, NQR complex catalyzes the reduction of ubiquinone-1 to ubiquinol by two successive reactions, coupled with the transport of Na(+) ions from the cytoplasm to the periplasm. The first step is catalyzed by NqrF, which accepts electrons from NADH and reduces ubiquinone-1 to ubisemiquinone by a one-electron transfer pathway. This chain is Na(+)-translocating NADH-quinone reductase subunit F, found in Chlamydia caviae (strain ATCC VR-813 / DSM 19441 / 03DC25 / GPIC) (Chlamydophila caviae).